The chain runs to 234 residues: Ribosomal RNA large subunit methyltransferase E (234 aa).

The tract at residues 1–37 (MSDDDRRRWKGPGPERQDSGRRSTERKVIARNARTES) is disordered. Residues G91, W93, D109, D125, and D149 each contribute to the S-adenosyl-L-methionine site. Catalysis depends on K189, which acts as the Proton acceptor.

This sequence belongs to the class I-like SAM-binding methyltransferase superfamily. RNA methyltransferase RlmE family.

Its subcellular location is the cytoplasm. The catalysed reaction is uridine(2552) in 23S rRNA + S-adenosyl-L-methionine = 2'-O-methyluridine(2552) in 23S rRNA + S-adenosyl-L-homocysteine + H(+). In terms of biological role, specifically methylates the uridine in position 2552 of 23S rRNA at the 2'-O position of the ribose in the fully assembled 50S ribosomal subunit. The chain is Ribosomal RNA large subunit methyltransferase E from Hyphomonas neptunium (strain ATCC 15444).